The chain runs to 365 residues: Endophilin-B1 (365 aa).

N-acetylmethionine is present on Met1. Positions 1–30 (MNIMDFNVKKLAADAGTFLSRAVQFTEEKL) are membrane-binding amphipathic helix. Residues 1-37 (MNIMDFNVKKLAADAGTFLSRAVQFTEEKLGQAEKTE) are required for membrane binding. Positions 27 to 261 (EEKLGQAEKT…LGSFPSNYHS (235 aa)) constitute a BAR domain. Thr145 bears the Phosphothreonine; by CDK5 mark. The stretch at 155–195 (YKTIAKERKLLQNKRLDLDAAKTRLKKAKAAETRASSEQEL) forms a coiled coil. The SH3 domain maps to 305 to 365 (GGSRRARVLY…VPITYLELLN (61 aa)).

It belongs to the endophilin family. As to quaternary structure, homodimer, and heterodimer with SH3GLB2. Binds BAX; induction of apoptosis augments BAX binding. Binds DNM1, HTT, AMPH, BIN1 and ARFGAP1. Interacts with UVRAG; UVRAG bridges the interaction to BECN1 indicative for an association with the PI3K complex II (PI3KC3-C2). In terms of processing, phosphorylated at Thr-145 by CDK5; this phosphorylation is required for autophagy induction in starved neurons and facilitates homodimerization.

The protein resides in the cytoplasm. Its subcellular location is the golgi apparatus membrane. It is found in the mitochondrion outer membrane. It localises to the cytoplasmic vesicle. The protein localises to the autophagosome membrane. The protein resides in the midbody. Its function is as follows. May be required for normal outer mitochondrial membrane dynamics. Required for coatomer-mediated retrograde transport in certain cells. May recruit other proteins to membranes with high curvature. May promote membrane fusion. Involved in activation of caspase-dependent apoptosis by promoting BAX/BAK1 activation. Involved in caspase-independent apoptosis during nutrition starvation and involved in the regulation of autophagy. Activates lipid kinase activity of PIK3C3 during autophagy probably by associating with the PI3K complex II (PI3KC3-C2). Associated with PI3KC3-C2 during autophagy may regulate the trafficking of ATG9A from the Golgi complex to the peripheral cytoplasm for the formation of autophagosomes by inducing Golgi membrane tubulation and fragmentation. Involved in regulation of degradative endocytic trafficking and cytokinesis, probably in the context of PI3KC3-C2. The sequence is that of Endophilin-B1 (SH3GLB1) from Bos taurus (Bovine).